Reading from the N-terminus, the 278-residue chain is 4-hydroxy-tetrahydrodipicolinate reductase (278 aa).

NAD(+) contacts are provided by residues 16–21 (GAGGRM) and glutamate 42. Arginine 43 is a binding site for NADP(+). NAD(+) contacts are provided by residues 106-108 (GTT) and 130-133 (AGNY). Histidine 163 acts as the Proton donor/acceptor in catalysis. Position 164 (histidine 164) interacts with (S)-2,3,4,5-tetrahydrodipicolinate. Lysine 167 serves as the catalytic Proton donor. 173-174 (GT) is a binding site for (S)-2,3,4,5-tetrahydrodipicolinate.

The protein belongs to the DapB family.

It localises to the cytoplasm. It catalyses the reaction (S)-2,3,4,5-tetrahydrodipicolinate + NAD(+) + H2O = (2S,4S)-4-hydroxy-2,3,4,5-tetrahydrodipicolinate + NADH + H(+). The catalysed reaction is (S)-2,3,4,5-tetrahydrodipicolinate + NADP(+) + H2O = (2S,4S)-4-hydroxy-2,3,4,5-tetrahydrodipicolinate + NADPH + H(+). Its pathway is amino-acid biosynthesis; L-lysine biosynthesis via DAP pathway; (S)-tetrahydrodipicolinate from L-aspartate: step 4/4. Functionally, catalyzes the conversion of 4-hydroxy-tetrahydrodipicolinate (HTPA) to tetrahydrodipicolinate. In Psychrobacter arcticus (strain DSM 17307 / VKM B-2377 / 273-4), this protein is 4-hydroxy-tetrahydrodipicolinate reductase.